The sequence spans 500 residues: ADP,ATP carrier protein 5 (500 aa).

Transmembrane regions (helical) follow at residues leucine 26–leucine 46, isoleucine 62–tyrosine 82, isoleucine 94–tyrosine 114, tyrosine 149–tryptophan 169, phenylalanine 184–methionine 204, isoleucine 224–leucine 244, leucine 287–valine 307, leucine 328–methionine 348, alanine 357–phenylalanine 377, isoleucine 381–glycine 401, and serine 469–valine 489.

It belongs to the ADP/ATP translocase tlc family.

It localises to the cell membrane. Provides the rickettsial cell with host ATP in exchange for rickettsial ADP. This is an obligate exchange system. This energy acquiring activity is an important component of rickettsial parasitism. In Rickettsia typhi (strain ATCC VR-144 / Wilmington), this protein is ADP,ATP carrier protein 5 (tlcE).